Reading from the N-terminus, the 185-residue chain is Alkyl hydroperoxide reductase AhpD (185 aa).

Cys131 functions as the Proton donor in the catalytic mechanism. Cys131 and Cys134 are disulfide-bonded. Cys134 acts as the Cysteine sulfenic acid (-SOH) intermediate in catalysis.

Belongs to the AhpD family. Homotrimer.

The catalysed reaction is N(6)-[(R)-dihydrolipoyl]-L-lysyl-[lipoyl-carrier protein] + a hydroperoxide = N(6)-[(R)-lipoyl]-L-lysyl-[lipoyl-carrier protein] + an alcohol + H2O. Its function is as follows. Antioxidant protein with alkyl hydroperoxidase activity. Required for the reduction of the AhpC active site cysteine residues and for the regeneration of the AhpC enzyme activity. The chain is Alkyl hydroperoxide reductase AhpD from Frankia alni (strain DSM 45986 / CECT 9034 / ACN14a).